A 188-amino-acid polypeptide reads, in one-letter code: Putative manganese efflux pump MntP (188 aa).

A run of 6 helical transmembrane segments spans residues 3-23 (WLTI…VALA), 39-59 (LGFH…LLGM), 65-85 (ISAY…GRMV), 104-124 (GMTM…VGLS), 125-145 (IAML…VAGV), and 167-187 (ICGG…HTLL).

The protein belongs to the MntP (TC 9.B.29) family.

The protein localises to the cell inner membrane. Functionally, probably functions as a manganese efflux pump. The chain is Putative manganese efflux pump MntP from Citrifermentans bemidjiense (strain ATCC BAA-1014 / DSM 16622 / JCM 12645 / Bem) (Geobacter bemidjiensis).